Reading from the N-terminus, the 311-residue chain is HPr kinase/phosphorylase (311 aa).

Residues histidine 139 and lysine 160 contribute to the active site. 154 to 161 (GKSGIGKS) contacts ATP. Serine 161 is a Mg(2+) binding site. Catalysis depends on aspartate 178, which acts as the Proton acceptor; for phosphorylation activity. Proton donor; for dephosphorylation activity. The tract at residues 201-210 (MEIRGLGIIN) is important for the catalytic mechanism of both phosphorylation and dephosphorylation. Glutamate 202 lines the Mg(2+) pocket. Arginine 245 is a catalytic residue. The tract at residues 266–271 (PISSGR) is important for the catalytic mechanism of dephosphorylation.

It belongs to the HPrK/P family. In terms of assembly, homohexamer. Mg(2+) is required as a cofactor.

It carries out the reaction [HPr protein]-L-serine + ATP = [HPr protein]-O-phospho-L-serine + ADP + H(+). It catalyses the reaction [HPr protein]-O-phospho-L-serine + phosphate + H(+) = [HPr protein]-L-serine + diphosphate. In terms of biological role, catalyzes the ATP- as well as the pyrophosphate-dependent phosphorylation of a specific serine residue in HPr, a phosphocarrier protein of the phosphoenolpyruvate-dependent sugar phosphotransferase system (PTS). HprK/P also catalyzes the pyrophosphate-producing, inorganic phosphate-dependent dephosphorylation (phosphorolysis) of seryl-phosphorylated HPr (P-Ser-HPr). In Mycoplasma genitalium (strain ATCC 33530 / DSM 19775 / NCTC 10195 / G37) (Mycoplasmoides genitalium), this protein is HPr kinase/phosphorylase (hprK).